The chain runs to 918 residues: Signal transduction histidine-protein kinase BarA (918 aa).

Over methionine 1–arginine 9 the chain is Cytoplasmic. A helical membrane pass occupies residues methionine 10 to valine 31. Topologically, residues histidine 32–glutamate 176 are periplasmic. The chain crosses the membrane as a helical span at residues isoleucine 177 to tryptophan 196. Residues arginine 197–glycine 918 are Cytoplasmic-facing. Positions arginine 200 to glutamate 252 constitute an HAMP domain. In terms of domain architecture, Histidine kinase spans asparagine 299–leucine 520. Histidine 302 bears the Phosphohistidine; by autocatalysis mark. Residues threonine 669–lysine 785 form the Response regulatory domain. At aspartate 718 the chain carries 4-aspartylphosphate. Residues lysine 822–glycine 918 form the HPt domain. Histidine 861 is subject to Phosphohistidine.

In terms of processing, activation requires a sequential transfer of a phosphate group from a His in the primary transmitter domain, to an Asp in the receiver domain and to a His in the secondary transmitter domain.

It is found in the cell inner membrane. The enzyme catalyses ATP + protein L-histidine = ADP + protein N-phospho-L-histidine.. Functionally, member of the two-component regulatory system UvrY/BarA involved in the regulation of carbon metabolism via the CsrA/CsrB regulatory system. Phosphorylates UvrY, probably via a four-step phosphorelay. The protein is Signal transduction histidine-protein kinase BarA (barA) of Escherichia coli O157:H7.